A 319-amino-acid polypeptide reads, in one-letter code: Urease accessory protein UreD (319 aa).

The interval 298-319 is disordered; it reads QEQPLPPSSFKTNTAVPAVRTH.

The protein belongs to the UreD family. UreD, UreF and UreG form a complex that acts as a GTP-hydrolysis-dependent molecular chaperone, activating the urease apoprotein by helping to assemble the nickel containing metallocenter of UreC. The UreE protein probably delivers the nickel.

The protein resides in the cytoplasm. Its function is as follows. Required for maturation of urease via the functional incorporation of the urease nickel metallocenter. In Synechococcus sp. (strain WH7805), this protein is Urease accessory protein UreD.